The primary structure comprises 206 residues: Macrophage immunometabolism regulator (206 aa).

Residue methionine 1 is modified to N-acetylmethionine. The tract at residues 1–41 is disordered; that stretch reads MEVDINGESRSTLTTLPFPGAEANSPGKAEAEKPRCSSTPC. Residues serine 25, serine 140, and serine 167 each carry the phosphoserine modification.

The protein belongs to the UNC119-binding protein family. Interacts with UNC119 and UNC119B; interaction preferentially takes place when UNC119 and UNC119B are unliganded with myristoylated proteins. Phosphorylated. In terms of tissue distribution, high expression in normal macrophages, monocytes, and cultured rheumatoid arthritis synovial fibroblasts (RASFs), with lower expression in B- and T-cells, and little to no expression in other tissues and cell lines.

Its subcellular location is the cytoplasm. It localises to the cell projection. The protein resides in the cilium. Its function is as follows. Regulates the macrophage function, by enhancing the resolution of inflammation and wound repair functions mediated by M2 macrophages. The regulation of macrophage function is, due at least in part, to its ability to inhibit glycolysis. May also play a role in trafficking of proteins via its interaction with UNC119 and UNC119B cargo adapters: may help the release of UNC119 and UNC119B cargo or the recycling of UNC119 and UNC119B. May play a role in ciliary membrane localization via its interaction with UNC119B and protein transport into photoreceptor cells. This chain is Macrophage immunometabolism regulator, found in Homo sapiens (Human).